The sequence spans 347 residues: MAIRRAQTLLCLSKFKTNFVSGSLHRFSSSSQNSNQFQNVGFIGLGNMGFRMVNNLIRAGYKVTVHDINRDVMKMFTEMGVSSRETPYEVAQDSEVVITMLPSSSHVMDVYTGTNGLLLGENDIRPALFIDSSTIDPQTTRKISLAVSNCNLKEKRDNWEKPVMLDAPVSGGVLAAEAGTLTFMVGGPEDAYLAARPILQSMGRTSIYCGGSGNGSAAKICNNLAMAVSMLGTSEALALGQSLGISASTLTEVLNTSSGRCWSSDAYNPVPGVMKGVPSSRDYNGGFASKLMAKDLNLAAASAEEVGHKSPLISKAQEIYKKMCEEGHETKDFSCVFRHFYNGKDEV.

A mitochondrion-targeting transit peptide spans methionine 1 to serine 34. NAD(+) contacts are provided by residues glutamine 38–aspartate 67, leucine 101–proline 102, and threonine 134. Lysine 219 is an active-site residue. NAD(+) is bound at residue lysine 294.

This sequence belongs to the HIBADH-related family. 3-hydroxyisobutyrate dehydrogenase subfamily.

It is found in the mitochondrion. The catalysed reaction is 3-hydroxy-2-methylpropanoate + NAD(+) = 2-methyl-3-oxopropanoate + NADH + H(+). Its pathway is amino-acid degradation; L-valine degradation. In Arabidopsis thaliana (Mouse-ear cress), this protein is Probable 3-hydroxyisobutyrate dehydrogenase, mitochondrial.